Here is a 363-residue protein sequence, read N- to C-terminus: Crh-like protein 3 (363 aa).

The N-terminal stretch at 1-19 is a signal peptide; the sequence is MSLLYLVALFVASICSVTA. An intrachain disulfide couples Cys25 to Cys32. A GH16 domain is found at 26 to 237; the sequence is NPLTTTCPPD…YSKAPFTMVL (212 aa). N-linked (GlcNAc...) asparagine glycans are attached at residues Asn41, Asn47, and Asn56. Glu118 functions as the Nucleophile in the catalytic mechanism. Glu122 (proton donor) is an active-site residue. A chitin-binding site is contributed by Glu122. N-linked (GlcNAc...) asparagine glycans are attached at residues Asn127, Asn141, and Asn161. Residues Arg203, Trp207, and Thr218 each coordinate chitin. N-linked (GlcNAc...) asparagine glycosylation is found at Asn252 and Asn269. The helical transmembrane segment at 298 to 318 threads the bilayer; the sequence is VYIGAGCVGAALLAGFIFFFI.

Belongs to the glycosyl hydrolase 16 family. CRH1 subfamily. In terms of processing, the GPI-like anchor contains a phosphoceramide lipid group. The anchor position has not been determined.

The protein resides in the cell membrane. The protein localises to the secreted. Its subcellular location is the cell wall. It carries out the reaction Random endo-hydrolysis of N-acetyl-beta-D-glucosaminide (1-&gt;4)-beta-linkages in chitin and chitodextrins.. Dual chitinase/transglycosylase that plays a role in cell wall architecture. Chitinase and transglycosylase activities are coupled. Required for the polysaccharide cross-linking at the septa and the cell wall. More specifically, transfers chitin to 1,6-beta-glucan in the cell wall. This chain is Crh-like protein 3, found in Aspergillus fumigatus (strain ATCC MYA-4609 / CBS 101355 / FGSC A1100 / Af293) (Neosartorya fumigata).